The chain runs to 262 residues: Adenosylcobinamide-GDP ribazoletransferase (262 aa).

The next 5 membrane-spanning stretches (helical) occupy residues 41-63 (AFPF…LMAL), 68-85 (LFAA…TGAL), 115-134 (IGTY…VSAF), 141-163 (FSPL…AMVW), and 201-221 (LLFY…VAFL).

Belongs to the CobS family. As to quaternary structure, associated with a large complex of proteins. Mg(2+) is required as a cofactor.

It is found in the cell inner membrane. The catalysed reaction is alpha-ribazole + adenosylcob(III)inamide-GDP = adenosylcob(III)alamin + GMP + H(+). The enzyme catalyses alpha-ribazole 5'-phosphate + adenosylcob(III)inamide-GDP = adenosylcob(III)alamin 5'-phosphate + GMP + H(+). The protein operates within cofactor biosynthesis; adenosylcobalamin biosynthesis; adenosylcobalamin from cob(II)yrinate a,c-diamide: step 7/7. Its function is as follows. Joins adenosylcobinamide-GDP and alpha-ribazole to generate adenosylcobalamin (Ado-cobalamin). Also synthesizes adenosylcobalamin 5'-phosphate from adenosylcobinamide-GDP and alpha-ribazole 5'-phosphate. The protein is Adenosylcobinamide-GDP ribazoletransferase (cobV) of Sinorhizobium sp.